The sequence spans 255 residues: 3-oxoacyl-[acyl-carrier-protein] reductase MabA (255 aa).

NADP(+) contacts are provided by residues 33 to 35, arginine 55, 69 to 70, glycine 98, tyrosine 161, lysine 165, isoleucine 194, and arginine 205; these read RGI and DV. The active-site Proton acceptor is tyrosine 161.

Belongs to the short-chain dehydrogenases/reductases (SDR) family. In terms of assembly, homotetramer.

The protein resides in the secreted. It localises to the cell wall. The catalysed reaction is a (3R)-hydroxyacyl-[ACP] + NADP(+) = a 3-oxoacyl-[ACP] + NADPH + H(+). Its pathway is lipid metabolism; mycolic acid biosynthesis. Its function is as follows. Part of the mycobacterial fatty acid elongation system FAS-II, which is involved in mycolic acid biosynthesis. Catalyzes the NADPH-dependent reduction of beta-ketoacyl derivatives, the second step of the FAS-II elongation cycle. In Mycobacterium avium, this protein is 3-oxoacyl-[acyl-carrier-protein] reductase MabA.